Consider the following 892-residue polypeptide: Alanine--tRNA ligase (892 aa).

Histidine 565, histidine 569, cysteine 675, and histidine 679 together coordinate Zn(2+). A disordered region spans residues 852–871; it reads MGGKGGGGRPDMAQAGGPEA.

The protein belongs to the class-II aminoacyl-tRNA synthetase family. The cofactor is Zn(2+).

It localises to the cytoplasm. It catalyses the reaction tRNA(Ala) + L-alanine + ATP = L-alanyl-tRNA(Ala) + AMP + diphosphate. Its function is as follows. Catalyzes the attachment of alanine to tRNA(Ala) in a two-step reaction: alanine is first activated by ATP to form Ala-AMP and then transferred to the acceptor end of tRNA(Ala). Also edits incorrectly charged Ser-tRNA(Ala) and Gly-tRNA(Ala) via its editing domain. The polypeptide is Alanine--tRNA ligase (Parvibaculum lavamentivorans (strain DS-1 / DSM 13023 / NCIMB 13966)).